The sequence spans 132 residues: Phosphoribosyl-AMP cyclohydrolase (132 aa).

Mg(2+) is bound at residue Asp89. A Zn(2+)-binding site is contributed by Cys90. Asp91 and Asp93 together coordinate Mg(2+). Residues Cys106 and Cys113 each contribute to the Zn(2+) site.

This sequence belongs to the PRA-CH family. In terms of assembly, homodimer. The cofactor is Mg(2+). Zn(2+) is required as a cofactor.

The protein localises to the cytoplasm. It catalyses the reaction 1-(5-phospho-beta-D-ribosyl)-5'-AMP + H2O = 1-(5-phospho-beta-D-ribosyl)-5-[(5-phospho-beta-D-ribosylamino)methylideneamino]imidazole-4-carboxamide. It participates in amino-acid biosynthesis; L-histidine biosynthesis; L-histidine from 5-phospho-alpha-D-ribose 1-diphosphate: step 3/9. In terms of biological role, catalyzes the hydrolysis of the adenine ring of phosphoribosyl-AMP. This Renibacterium salmoninarum (strain ATCC 33209 / DSM 20767 / JCM 11484 / NBRC 15589 / NCIMB 2235) protein is Phosphoribosyl-AMP cyclohydrolase.